Here is a 231-residue protein sequence, read N- to C-terminus: Ribonuclease 3 (231 aa).

An RNase III domain is found at 12–139 (LKAFLQKNNI…LIAAIYLDQG (128 aa)). Glu52 provides a ligand contact to Mg(2+). Residue Asp56 is part of the active site. Asp125 and Glu128 together coordinate Mg(2+). Glu128 is an active-site residue. Residues 165 to 231 (DPKSELQEYF…AANALSKLKT (67 aa)) enclose the DRBM domain.

Belongs to the ribonuclease III family. In terms of assembly, homodimer. Requires Mg(2+) as cofactor.

Its subcellular location is the cytoplasm. The enzyme catalyses Endonucleolytic cleavage to 5'-phosphomonoester.. Digests double-stranded RNA. Involved in the processing of primary rRNA transcript to yield the immediate precursors to the large and small rRNAs (23S and 16S). Processes some mRNAs, and tRNAs when they are encoded in the rRNA operon. Processes pre-crRNA and tracrRNA of type II CRISPR loci if present in the organism. This chain is Ribonuclease 3, found in Mycoplasmopsis synoviae (strain 53) (Mycoplasma synoviae).